A 166-amino-acid polypeptide reads, in one-letter code: Large ribosomal subunit protein uL10 (166 aa).

It belongs to the universal ribosomal protein uL10 family. In terms of assembly, part of the ribosomal stalk of the 50S ribosomal subunit. The N-terminus interacts with L11 and the large rRNA to form the base of the stalk. The C-terminus forms an elongated spine to which L12 dimers bind in a sequential fashion forming a multimeric L10(L12)X complex.

In terms of biological role, forms part of the ribosomal stalk, playing a central role in the interaction of the ribosome with GTP-bound translation factors. This is Large ribosomal subunit protein uL10 from Shewanella amazonensis (strain ATCC BAA-1098 / SB2B).